We begin with the raw amino-acid sequence, 374 residues long: Mitochondrial import inner membrane translocase subunit tim50 (374 aa).

The transit peptide at 1 to 48 directs the protein to the mitochondrion; it reads MILNKVAKCYGKQIGFFGNKTTQFIKPNQTIFLIGGTKRLFTTQQQQS. The disordered stretch occupies residues 42 to 97; the sequence is TTQQQQSPKKEEPKSEQQKKVEDKTEEKEKEKDEEENENEKEKENEDGEGQKKKSK. 2 stretches are compositionally biased toward basic and acidic residues: residues 49-72 and 81-93; these read PKKE…KEKE and EKEK…EGQK. Residues 103-125 traverse the membrane as a helical segment; the sequence is IVTSVTSTFFAGVLVASTFGYLT. The FCP1 homology domain occupies 191-332; the sequence is PGGKKYTLVI…IELLPVLESF (142 aa).

It belongs to the TIM50 family. In terms of assembly, component of the mitochondrial import inner membrane translocase complex.

The protein resides in the mitochondrion inner membrane. Its function is as follows. Component of the mitochondrial import inner membrane translocase that mediates the translocation of transit peptide-containing proteins across the mitochondrial inner membrane. This chain is Mitochondrial import inner membrane translocase subunit tim50 (timm50), found in Dictyostelium discoideum (Social amoeba).